Consider the following 233-residue polypeptide: Large ribosomal subunit protein uL1 (233 aa).

The protein belongs to the universal ribosomal protein uL1 family. As to quaternary structure, part of the 50S ribosomal subunit.

Functionally, binds directly to 23S rRNA. The L1 stalk is quite mobile in the ribosome, and is involved in E site tRNA release. In terms of biological role, protein L1 is also a translational repressor protein, it controls the translation of the L11 operon by binding to its mRNA. The sequence is that of Large ribosomal subunit protein uL1 from Rhizobium etli (strain ATCC 51251 / DSM 11541 / JCM 21823 / NBRC 15573 / CFN 42).